A 337-amino-acid polypeptide reads, in one-letter code: Cysteinyl leukotriene receptor 1 (337 aa).

The Extracellular segment spans residues 1 to 28 (MDETGNLTVSSATCHDTIDDFRNQVYST). N-linked (GlcNAc...) asparagine glycosylation is present at Asn6. Residues 29-49 (LYSMISVVGFFGNGFVLYVLI) form a helical membrane-spanning segment. Residues 50-57 (KTYHKKSA) are Cytoplasmic-facing. Residues 58–78 (FQVYMINLAVADLLCVCTLPL) traverse the membrane as a helical segment. The Extracellular portion of the chain corresponds to 79-106 (RVVYYVHKGIWLFGDFLCRLSTYALYVN). A disulfide bridge connects residues Cys96 and Cys173. A helical transmembrane segment spans residues 107 to 127 (LYCSIFFMTAMSFFRCIAIVF). Over 128-141 (PVQNINLVTQKKAR) the chain is Cytoplasmic. Residues 142-162 (FVCVGIWIFVILTSSPFLMAK) form a helical membrane-spanning segment. At 163 to 193 (PQKDEKNNTKCFEPPQDNQTKNHVLVLHYVS) the chain is on the extracellular side. Residues Asn169 and Asn180 are each glycosylated (N-linked (GlcNAc...) asparagine). The chain crosses the membrane as a helical span at residues 194 to 214 (LFVGFIIPFVIIIVCYTMIIL). Residues 215–230 (TLLKKSMKKNLSSHKK) are Cytoplasmic-facing. Residues 231–251 (AIGMIMVVTAAFLVSFMPYHI) form a helical membrane-spanning segment. The Extracellular segment spans residues 252–276 (QRTIHLHFLHNETKPCDSVLRMQKS). An N-linked (GlcNAc...) asparagine glycan is attached at Asn262. A helical membrane pass occupies residues 277-297 (VVITLSLAASNCCFDPLLYFF). The Cytoplasmic portion of the chain corresponds to 298 to 337 (SGGNFRKRLSTFRKHSLSSVTYVPRKKASLPEKGEEICKV).

Belongs to the G-protein coupled receptor 1 family. As to expression, widely expressed, with highest levels in spleen and peripheral blood leukocytes. Lower expression in several tissues, such as lung (mostly in smooth muscle bundles and alveolar macrophages), placenta, small intestine, pancreas, colon and heart.

The protein resides in the cell membrane. Receptor for cysteinyl leukotrienes mediating bronchoconstriction of individuals with and without asthma. Stimulation by LTD4 results in the contraction and proliferation of smooth muscle, edema, eosinophil migration and damage to the mucus layer in the lung. This response is mediated via a G-protein that activates a phosphatidylinositol-calcium second messenger system. The rank order of affinities for the leukotrienes is LTD4 &gt;&gt; LTE4 = LTC4 &gt;&gt; LTB4. The polypeptide is Cysteinyl leukotriene receptor 1 (CYSLTR1) (Homo sapiens (Human)).